A 203-amino-acid chain; its full sequence is Probable nicotinate-nucleotide adenylyltransferase (203 aa).

It belongs to the NadD family.

It carries out the reaction nicotinate beta-D-ribonucleotide + ATP + H(+) = deamido-NAD(+) + diphosphate. Its pathway is cofactor biosynthesis; NAD(+) biosynthesis; deamido-NAD(+) from nicotinate D-ribonucleotide: step 1/1. In terms of biological role, catalyzes the reversible adenylation of nicotinate mononucleotide (NaMN) to nicotinic acid adenine dinucleotide (NaAD). The polypeptide is Probable nicotinate-nucleotide adenylyltransferase (Clostridium kluyveri (strain ATCC 8527 / DSM 555 / NBRC 12016 / NCIMB 10680 / K1)).